The primary structure comprises 32 residues: Fibrinolytic enzyme (32 aa).

In terms of processing, the N-terminus is blocked.

Inhibited by phenylmethanesulfonyl fluoride (PMSF). Not inhibited by EDTA, EGTA, beta-mercaptoethanol, indoacetamide, benzamidine, aprotinin, pepstatin A and trypsin inhibitor. Functionally, plasmin-like serine protease. Has fibrinolytic and fibrinogenolytic but not plasminogenolytic activity. Cleaves after Arg and Lys residues. The sequence is that of Fibrinolytic enzyme from Hediste japonica (Polychaete worm).